The primary structure comprises 371 residues: Partitioning defective 6 homolog beta (371 aa).

Phosphoserine occurs at positions 10 and 11. The PB1 domain maps to 16–96 (TMEVKSKFGA…PLLRIFIQKK (81 aa)). Residues 126-253 (RKKPHIVISM…ITVRPANQRN (128 aa)) form an interaction with PARD3 and CDC42 region. The Pseudo-CRIB domain occupies 133-150 (ISMPQDFRPVSSIIDVDI). The 94-residue stretch at 157-250 (RVRLYKYGTE…NLIITVRPAN (94 aa)) folds into the PDZ domain. Disordered regions lie at residues 253-273 (NNVV…DNSL) and 326-371 (FESG…IITL). Over residues 326–340 (FESGQNGFSPPQDTS) the composition is skewed to polar residues. Over residues 352–363 (LESRAPDQKLLE) the composition is skewed to basic and acidic residues.

The protein belongs to the PAR6 family. Interacts with PARD3. Interacts with GTP-bound forms of CDC42, RHOQ/TC10 and RAC1. Interacts with the N-terminal part of PRKCI and PRKCZ. Part of a complex with PARD3, CDC42 or RAC1 and PRKCI or PRKCZ. Part of a complex with LLGL1 and PRKCI. Interacts with ALS2CR19. Interacts with ECT2. Interacts with PALS1. As to expression, expressed in pancreas and in both adult and fetal kidney. Weakly expressed in placenta and lung. Not expressed in other tissues.

The protein resides in the cytoplasm. It localises to the cell membrane. Its subcellular location is the cell junction. The protein localises to the tight junction. Its function is as follows. Adapter protein involved in asymmetrical cell division and cell polarization processes. Probably involved in formation of epithelial tight junctions. Association with PARD3 may prevent the interaction of PARD3 with F11R/JAM1, thereby preventing tight junction assembly. The PARD6-PARD3 complex links GTP-bound Rho small GTPases to atypical protein kinase C proteins. This Mus musculus (Mouse) protein is Partitioning defective 6 homolog beta (Pard6b).